Here is a 320-residue protein sequence, read N- to C-terminus: Acetyl-coenzyme A carboxylase carboxyl transferase subunit alpha (320 aa).

One can recognise a CoA carboxyltransferase C-terminal domain in the interval A33–A294.

The protein belongs to the AccA family. In terms of assembly, acetyl-CoA carboxylase is a heterohexamer composed of biotin carboxyl carrier protein (AccB), biotin carboxylase (AccC) and two subunits each of ACCase subunit alpha (AccA) and ACCase subunit beta (AccD).

It localises to the cytoplasm. It catalyses the reaction N(6)-carboxybiotinyl-L-lysyl-[protein] + acetyl-CoA = N(6)-biotinyl-L-lysyl-[protein] + malonyl-CoA. It functions in the pathway lipid metabolism; malonyl-CoA biosynthesis; malonyl-CoA from acetyl-CoA: step 1/1. Its function is as follows. Component of the acetyl coenzyme A carboxylase (ACC) complex. First, biotin carboxylase catalyzes the carboxylation of biotin on its carrier protein (BCCP) and then the CO(2) group is transferred by the carboxyltransferase to acetyl-CoA to form malonyl-CoA. The protein is Acetyl-coenzyme A carboxylase carboxyl transferase subunit alpha of Caulobacter sp. (strain K31).